Reading from the N-terminus, the 206-residue chain is Protein GrpE (206 aa).

A compositionally biased stretch (basic and acidic residues) spans 1–14 (MDKKNEQQEVREEN). A disordered region spans residues 1–56 (MDKKNEQQEVREENDTSINQESETQVELEEEVVNEECETSSEKTDEKEVDDENVTD). Over residues 24–39 (TQVELEEEVVNEECET) the composition is skewed to acidic residues.

This sequence belongs to the GrpE family. Homodimer.

Its subcellular location is the cytoplasm. Functionally, participates actively in the response to hyperosmotic and heat shock by preventing the aggregation of stress-denatured proteins, in association with DnaK and GrpE. It is the nucleotide exchange factor for DnaK and may function as a thermosensor. Unfolded proteins bind initially to DnaJ; upon interaction with the DnaJ-bound protein, DnaK hydrolyzes its bound ATP, resulting in the formation of a stable complex. GrpE releases ADP from DnaK; ATP binding to DnaK triggers the release of the substrate protein, thus completing the reaction cycle. Several rounds of ATP-dependent interactions between DnaJ, DnaK and GrpE are required for fully efficient folding. The sequence is that of Protein GrpE from Clostridioides difficile (strain 630) (Peptoclostridium difficile).